The following is a 384-amino-acid chain: Shufflon-specific DNA recombinase (384 aa).

In terms of domain architecture, Core-binding (CB) spans 9 to 96; that stretch reads MSLSRALDKY…LLSSLFNIAR (88 aa). One can recognise a Tyr recombinase domain in the interval 118-284; sequence GRDRRLTSSE…RAWQLVSKLD (167 aa). Residues Arg155, Lys180, His235, Arg238, and His262 contribute to the active site. The active-site O-(3'-phospho-DNA)-tyrosine intermediate is Tyr271.

This sequence belongs to the 'phage' integrase family.

Functionally, shufflon-specific DNA recombinase. In Escherichia coli, this protein is Shufflon-specific DNA recombinase (rci).